Reading from the N-terminus, the 608-residue chain is MIKANVYSCSKFRFLYRRRFLSQSSFVHSLDANVSSLIAAVKSCVSIELCRLLHCKVVKSVSYRHGFIGDQLVGCYLRLGHDVCAEKLFDEMPERDLVSWNSLISGYSGRGYLGKCFEVLSRMMISEVGFRPNEVTFLSMISACVYGGSKEEGRCIHGLVMKFGVLEEVKVVNAFINWYGKTGDLTSSCKLFEDLSIKNLVSWNTMIVIHLQNGLAEKGLAYFNMSRRVGHEPDQATFLAVLRSCEDMGVVRLAQGIHGLIMFGGFSGNKCITTALLDLYSKLGRLEDSSTVFHEITSPDSMAWTAMLAAYATHGFGRDAIKHFELMVHYGISPDHVTFTHLLNACSHSGLVEEGKHYFETMSKRYRIDPRLDHYSCMVDLLGRSGLLQDAYGLIKEMPMEPSSGVWGALLGACRVYKDTQLGTKAAERLFELEPRDGRNYVMLSNIYSASGLWKDASRIRNLMKQKGLVRASGCSYIEHGNKIHKFVVGDWSHPESEKIQKKLKEIRKKMKSEMGYKSKTEFVLHDVGEDVKEEMINQHSEKIAMAFGLLVVSPMEPIIIRKNLRICGDCHETAKAISLIEKRRIIIRDSKRFHHFLDGSCSCSDYW.

The N-terminal 28 residues, M1–H28, are a transit peptide targeting the mitochondrion. PPR repeat units follow at residues L30–R64, H65–R95, D96–F130, N133–E167, E168–K198, N199–P233, D234–G268, N269–P299, D300–P334, D335–R365, and R371–E401. The interval V406 to G481 is type E motif. The tract at residues N482–K512 is type E(+) motif. The segment at E514 to W608 is type DYW motif.

It belongs to the PPR family. PCMP-H subfamily.

It localises to the mitochondrion. The sequence is that of Pentatricopeptide repeat-containing protein At5g40410, mitochondrial (PCMP-H15) from Arabidopsis thaliana (Mouse-ear cress).